A 929-amino-acid chain; its full sequence is Protocadherin gamma-B7 (929 aa).

Residues 1–30 (MGGSCAQRRRAGPRQVLFPLLLPLFYPTLC) form the signal peptide. 6 Cadherin domains span residues 31 to 133 (EPIR…APQF), 134 to 242 (QKDE…PPVF), 243 to 347 (SQDV…SPEI), 348 to 452 (IITS…APVF), 453 to 562 (GQSA…APRV), and 570 to 675 (DGSA…LPDF). Residues 31–691 (EPIRYSIPEE…SDSQAEMQFY (661 aa)) are Extracellular-facing. N-linked (GlcNAc...) asparagine glycosylation is found at Asn-419 and Asn-545. The helical transmembrane segment at 692–712 (LVVALALISVLFLLAVILAIA) threads the bilayer. Topologically, residues 713 to 929 (LRLRQSFSPT…KKKSGKKEKK (217 aa)) are cytoplasmic. Disordered stretches follow at residues 806–838 (QAPPNTDWRFSQAQRPGTSGSQNGDDTGTWPNN) and 899–929 (ATLTNAAGKRDGKAPAGGNGNKKKSGKKEKK). The span at 807-838 (APPNTDWRFSQAQRPGTSGSQNGDDTGTWPNN) shows a compositional bias: polar residues. Basic residues predominate over residues 919-929 (NKKKSGKKEKK).

It is found in the cell membrane. Functionally, potential calcium-dependent cell-adhesion protein. May be involved in the establishment and maintenance of specific neuronal connections in the brain. This is Protocadherin gamma-B7 (PCDHGB7) from Pan troglodytes (Chimpanzee).